A 109-amino-acid chain; its full sequence is Large ribosomal subunit protein uL22 (109 aa).

This sequence belongs to the universal ribosomal protein uL22 family. Part of the 50S ribosomal subunit.

Functionally, this protein binds specifically to 23S rRNA; its binding is stimulated by other ribosomal proteins, e.g. L4, L17, and L20. It is important during the early stages of 50S assembly. It makes multiple contacts with different domains of the 23S rRNA in the assembled 50S subunit and ribosome. Its function is as follows. The globular domain of the protein is located near the polypeptide exit tunnel on the outside of the subunit, while an extended beta-hairpin is found that lines the wall of the exit tunnel in the center of the 70S ribosome. The polypeptide is Large ribosomal subunit protein uL22 (Laribacter hongkongensis (strain HLHK9)).